The following is a 175-amino-acid chain: ATP synthase subunit b, chloroplastic (175 aa).

Residues 22-42 (VFETNIINLAAVVGIVVSFVG) form a helical membrane-spanning segment.

This sequence belongs to the ATPase B chain family. F-type ATPases have 2 components, F(1) - the catalytic core - and F(0) - the membrane proton channel. F(1) has five subunits: alpha(3), beta(3), gamma(1), delta(1), epsilon(1). F(0) has four main subunits: a(1), b(1), b'(1) and c(10-14). The alpha and beta chains form an alternating ring which encloses part of the gamma chain. F(1) is attached to F(0) by a central stalk formed by the gamma and epsilon chains, while a peripheral stalk is formed by the delta, b and b' chains.

It is found in the plastid. The protein localises to the chloroplast thylakoid membrane. Its function is as follows. F(1)F(0) ATP synthase produces ATP from ADP in the presence of a proton or sodium gradient. F-type ATPases consist of two structural domains, F(1) containing the extramembraneous catalytic core and F(0) containing the membrane proton channel, linked together by a central stalk and a peripheral stalk. During catalysis, ATP synthesis in the catalytic domain of F(1) is coupled via a rotary mechanism of the central stalk subunits to proton translocation. In terms of biological role, component of the F(0) channel, it forms part of the peripheral stalk, linking F(1) to F(0). This chain is ATP synthase subunit b, chloroplastic, found in Chlamydomonas reinhardtii (Chlamydomonas smithii).